The chain runs to 247 residues: Small ribosomal subunit protein uS3 (247 aa).

The 69-residue stretch at I38 to K106 folds into the KH type-2 domain. Residues S214–G226 show a composition bias toward basic and acidic residues. The disordered stretch occupies residues S214–G247. The span at R227–R238 shows a compositional bias: basic residues.

The protein belongs to the universal ribosomal protein uS3 family. As to quaternary structure, part of the 30S ribosomal subunit. Forms a tight complex with proteins S10 and S14.

Functionally, binds the lower part of the 30S subunit head. Binds mRNA in the 70S ribosome, positioning it for translation. This is Small ribosomal subunit protein uS3 from Corynebacterium jeikeium (strain K411).